The following is a 446-amino-acid chain: WEB family protein At3g56270 (446 aa).

Residues Thr-313–Ser-349 are a coiled coil.

Belongs to the WEB family.

This chain is WEB family protein At3g56270, found in Arabidopsis thaliana (Mouse-ear cress).